Reading from the N-terminus, the 268-residue chain is Magnesium dechelatase SGR1, chloroplastic (268 aa).

The transit peptide at 1 to 48 (MCSLSAIMLLPTKLKPAYSDKRSNSSSSSSLFFNNRRSKKKNQSIVPV) directs the protein to the chloroplast.

The protein belongs to the staygreen family. Interacts with HCAR, the chlorophyll catabolic enzymes (CCEs) NYC1, PAO and RCCR, and the LHCII complex. Part of a SGR1-CCE-LHCII complex, which acts in chlorophyll breakdown. Expressed in roots, leaves, seeds, flowers, buds, petals, sepals and siliques.

The protein localises to the plastid. It is found in the chloroplast thylakoid membrane. The catalysed reaction is chlorophyll a + 2 H(+) = pheophytin a + Mg(2+). Its function is as follows. Magnesium chelatase involved in chlorophyll a degradation in the chlorophyll-protein complexes of photosystem I (PSI) and photosystem II (PSII). Contributes to the degradation of PSI and PSII in the thylakoid membranes. Required to trigger chlorophyll degradation during natural and dark-induced leaf senescence. Mediates chlorophyll degradation during embryo degreening. Recombinant SGR1 possesses high dechelating activity against chlorophyll a, very low activity against chlorophyllide a, and no activity against chlorophyll b. Magnesium dechelation of chlorophyll a by SGR1 activates chlorophyll b degradation by inducing the expression of NYC1, an enzyme involved in chlorophyll b degradation. The polypeptide is Magnesium dechelatase SGR1, chloroplastic (Arabidopsis thaliana (Mouse-ear cress)).